The chain runs to 83 residues: Small ribosomal subunit protein bS16 (83 aa).

Belongs to the bacterial ribosomal protein bS16 family.

The polypeptide is Small ribosomal subunit protein bS16 (Finegoldia magna (strain ATCC 29328 / DSM 20472 / WAL 2508) (Peptostreptococcus magnus)).